The primary structure comprises 521 residues: SET and MYND domain-containing protein DDB_G0292140 (521 aa).

The segment at M1 to K101 is disordered. The span at T12 to T55 shows a compositional bias: low complexity. The span at T56–T65 shows a compositional bias: pro residues. Positions P66–K90 are enriched in low complexity. Positions G91–K101 are enriched in basic residues. Residues W122–I406 form the SET domain. Positions 167, 170, 188, 191, 197, 201, 209, and 213 each coordinate Zn(2+). The MYND-type zinc finger occupies C167–C213. Residues Q442 to N521 form a disordered region. Positions K448 to D469 are enriched in acidic residues. The span at D470 to G485 shows a compositional bias: basic and acidic residues. Residues S486–N495 are compositionally biased toward acidic residues. A compositionally biased stretch (low complexity) spans N497–H514.

This sequence belongs to the class V-like SAM-binding methyltransferase superfamily.

In terms of biological role, probable methyltransferase. The sequence is that of SET and MYND domain-containing protein DDB_G0292140 from Dictyostelium discoideum (Social amoeba).